A 230-amino-acid chain; its full sequence is Antiholin-like protein LrgB (230 aa).

7 helical membrane passes run 5–25, 30–50, 61–81, 92–112, 149–169, 177–197, and 209–229; these read MTPY…TLLF, GFFL…FLKV, GGKM…IPLY, WQIL…VFIV, ITSF…ALFL, PIAK…AVGI, and IAVT…MPFI.

It belongs to the CidB/LrgB family. LrgB subfamily.

It is found in the cell membrane. Its function is as follows. Inhibits the expression or activity of extracellular murein hydrolases by interacting, possibly with LrgA, with the holin-like protein CidA. The LrgAB and CidA proteins may affect the proton motive force of the membrane. May be involved in programmed cell death (PCD), possibly triggering PCD in response to antibiotics and environmental stresses. The chain is Antiholin-like protein LrgB from Bacillus cereus (strain Q1).